Here is a 135-residue protein sequence, read N- to C-terminus: Galectin-1 (135 aa).

Residue Ala2 is modified to N-acetylalanine. A Galectin domain is found at 4 to 135 (GLVASNLNLK…DFKIKCVAFD (132 aa)). Lys13 and Lys29 each carry N6-acetyllysine. Ser30 carries the phosphoserine modification. A beta-D-galactoside contacts are provided by residues 45–49 (HFNPR), His53, Asn62, and 69–72 (WGAE). Lys108 is modified (N6-acetyllysine; alternate). The residue at position 108 (Lys108) is an N6-succinyllysine; alternate. Position 128 is an N6-acetyllysine (Lys128).

Homodimer. Binds LGALS3BP. Interacts with CD2, CD3, CD4, CD6, CD7, CD43, ALCAM and CD45. Interacts with laminin (via poly-N-acetyllactosamine). Interacts with SUSD2. Interacts with cargo receptor TMED10; the interaction mediates the translocation from the cytoplasm into the ERGIC (endoplasmic reticulum-Golgi intermediate compartment) and thereby secretion. The N-terminus is blocked.

It is found in the secreted. It localises to the extracellular space. Its subcellular location is the extracellular matrix. The protein resides in the cytoplasm. Lectin that binds beta-galactoside and a wide array of complex carbohydrates. Plays a role in regulating apoptosis, cell proliferation and cell differentiation. Inhibits CD45 protein phosphatase activity and therefore the dephosphorylation of Lyn kinase. Strong inducer of T-cell apoptosis. This chain is Galectin-1, found in Bubalus bubalis (Domestic water buffalo).